The chain runs to 177 residues: Small ribosomal subunit protein uS13 (177 aa).

Over residues 132–145 (GVRHKRGQKVRGQR) the composition is skewed to basic residues. Residues 132-177 (GVRHKRGQKVRGQRTKSTGRTEGTIGVNVEAIKEEQAEDAAAEDDE) are disordered. The segment covering 167–177 (QAEDAAAEDDE) has biased composition (acidic residues).

Belongs to the universal ribosomal protein uS13 family. As to quaternary structure, part of the 30S ribosomal subunit. Forms a loose heterodimer with protein S19. Forms two bridges to the 50S subunit in the 70S ribosome.

In terms of biological role, located at the top of the head of the 30S subunit, it contacts several helices of the 16S rRNA. In the 70S ribosome it contacts the 23S rRNA (bridge B1a) and protein L5 of the 50S subunit (bridge B1b), connecting the 2 subunits; these bridges are implicated in subunit movement. The polypeptide is Small ribosomal subunit protein uS13 (Haloarcula marismortui (strain ATCC 43049 / DSM 3752 / JCM 8966 / VKM B-1809) (Halobacterium marismortui)).